The following is a 1770-amino-acid chain: Transposon Ty2-OR1 Gag-Pol polyprotein (1770 aa).

2 stretches are compositionally biased toward polar residues: residues 1–39 (MESQ…SASN) and 49–60 (KVNSQQETTPGT). 2 disordered regions span residues 1 to 88 (MESQ…YQQH) and 359 to 449 (QHSE…SNDE). An RNA-binding region spans residues 295 to 397 (ENNINVSDRL…SSKPRAAKAH (103 aa)). Over residues 369–381 (TSPNTTNTKVTTR) the composition is skewed to low complexity. 2 stretches are compositionally biased toward polar residues: residues 399-408 (IATSSKFSRV) and 415-435 (ESTV…GQQQ). D457 (for protease activity; shared with dimeric partner) is an active-site residue. An integrase-type zinc finger-like region spans residues 579–636 (NVNKSKSVNKYPYPLIHRMLGHANFRSIQKSLKKNAVTYLKESDIEWSNASTYQCPDC). The region spanning 656–831 (ESYEPFQYLH…AGLDITTILP (176 aa)) is the Integrase catalytic domain. Positions 667 and 732 each coordinate Mg(2+). Composition is skewed to polar residues over residues 916–929 (FIEQ…YDQN), 1009–1024 (ESDT…FTAR), and 1065–1082 (QRNS…STPS). Disordered stretches follow at residues 916–935 (FIEQ…SDHD), 1005–1038 (GGTI…MIDL), and 1057–1205 (GGTE…TEIE). A Bipartite nuclear localization signal motif is present at residues 1193-1227 (KKRSLEDNETEIEVSRDTWNNKNMRSLEPPRSKKR). The Reverse transcriptase Ty1/copia-type domain occupies 1353–1491 (NDYYITQLDI…DILGLEIKYQ (139 aa)). Mg(2+) contacts are provided by D1361, D1442, D1443, D1625, E1667, and D1700. Residues 1625–1767 (DASYGNQPYY…IKTFKLLTNK (143 aa)) form the RNase H Ty1/copia-type domain.

The capsid protein forms a homotrimer, from which the VLPs are assembled. The protease is a homodimer, whose active site consists of two apposed aspartic acid residues. In terms of processing, initially, virus-like particles (VLPs) are composed of the structural unprocessed proteins Gag and Gag-Pol, and also contain the host initiator methionine tRNA (tRNA(i)-Met) which serves as a primer for minus-strand DNA synthesis, and a dimer of genomic Ty RNA. Processing of the polyproteins occurs within the particle and proceeds by an ordered pathway, called maturation. First, the protease (PR) is released by autocatalytic cleavage of the Gag-Pol polyprotein, and this cleavage is a prerequisite for subsequent processing at the remaining sites to release the mature structural and catalytic proteins. Maturation takes place prior to the RT reaction and is required to produce transposition-competent VLPs.

It localises to the cytoplasm. The protein localises to the nucleus. The enzyme catalyses DNA(n) + a 2'-deoxyribonucleoside 5'-triphosphate = DNA(n+1) + diphosphate. It catalyses the reaction Endonucleolytic cleavage to 5'-phosphomonoester.. Capsid protein (CA) is the structural component of the virus-like particle (VLP), forming the shell that encapsulates the retrotransposons dimeric RNA genome. The particles are assembled from trimer-clustered units and there are holes in the capsid shells that allow for the diffusion of macromolecules. CA also has nucleocapsid-like chaperone activity, promoting primer tRNA(i)-Met annealing to the multipartite primer-binding site (PBS), dimerization of Ty2 RNA and initiation of reverse transcription. In terms of biological role, the aspartyl protease (PR) mediates the proteolytic cleavages of the Gag and Gag-Pol polyproteins after assembly of the VLP. Its function is as follows. Reverse transcriptase/ribonuclease H (RT) is a multifunctional enzyme that catalyzes the conversion of the retro-elements RNA genome into dsDNA within the VLP. The enzyme displays a DNA polymerase activity that can copy either DNA or RNA templates, and a ribonuclease H (RNase H) activity that cleaves the RNA strand of RNA-DNA heteroduplexes during plus-strand synthesis and hydrolyzes RNA primers. The conversion leads to a linear dsDNA copy of the retrotransposon that includes long terminal repeats (LTRs) at both ends. Functionally, integrase (IN) targets the VLP to the nucleus, where a subparticle preintegration complex (PIC) containing at least integrase and the newly synthesized dsDNA copy of the retrotransposon must transit the nuclear membrane. Once in the nucleus, integrase performs the integration of the dsDNA into the host genome. In Saccharomyces cerevisiae (strain ATCC 204508 / S288c) (Baker's yeast), this protein is Transposon Ty2-OR1 Gag-Pol polyprotein (TY2B-OR1).